We begin with the raw amino-acid sequence, 468 residues long: Glutamate--tRNA ligase 2 (468 aa).

The 'HIGH' region signature appears at 9–19 (PSPTGFLHIGG). A 'KMSKS' region motif is present at residues 238 to 242 (KLSKR). K241 is an ATP binding site.

The protein belongs to the class-I aminoacyl-tRNA synthetase family. Glutamate--tRNA ligase type 1 subfamily. As to quaternary structure, monomer.

The protein resides in the cytoplasm. It carries out the reaction tRNA(Glu) + L-glutamate + ATP = L-glutamyl-tRNA(Glu) + AMP + diphosphate. Its function is as follows. Catalyzes the attachment of glutamate to tRNA(Glu) in a two-step reaction: glutamate is first activated by ATP to form Glu-AMP and then transferred to the acceptor end of tRNA(Glu). This Rhodospirillum rubrum (strain ATCC 11170 / ATH 1.1.1 / DSM 467 / LMG 4362 / NCIMB 8255 / S1) protein is Glutamate--tRNA ligase 2.